The following is a 227-amino-acid chain: Cytochrome c oxidase subunit 2 (227 aa).

Topologically, residues 1–14 are mitochondrial intermembrane; sequence MAYPMQLGLQDATS. The chain crosses the membrane as a helical span at residues 15-45; it reads PIMEELTDFHDHTLMIVFLISTLVLYIISLM. Residues 46 to 59 lie on the Mitochondrial matrix side of the membrane; it reads LTTKLTHTNTMDAQ. A helical membrane pass occupies residues 60-87; it reads EVETVWTILPAIILIMIALPSLRILYMM. Over 88-227 the chain is Mitochondrial intermembrane; sequence DEINDPYLTV…QFESWTSSMT (140 aa). Cu cation is bound by residues His161, Cys196, Glu198, Cys200, His204, and Met207. Glu198 lines the Mg(2+) pocket.

Belongs to the cytochrome c oxidase subunit 2 family. As to quaternary structure, component of the cytochrome c oxidase (complex IV, CIV), a multisubunit enzyme composed of 14 subunits. The complex is composed of a catalytic core of 3 subunits MT-CO1, MT-CO2 and MT-CO3, encoded in the mitochondrial DNA, and 11 supernumerary subunits COX4I, COX5A, COX5B, COX6A, COX6B, COX6C, COX7A, COX7B, COX7C, COX8 and NDUFA4, which are encoded in the nuclear genome. The complex exists as a monomer or a dimer and forms supercomplexes (SCs) in the inner mitochondrial membrane with NADH-ubiquinone oxidoreductase (complex I, CI) and ubiquinol-cytochrome c oxidoreductase (cytochrome b-c1 complex, complex III, CIII), resulting in different assemblies (supercomplex SCI(1)III(2)IV(1) and megacomplex MCI(2)III(2)IV(2)). Found in a complex with TMEM177, COA6, COX18, COX20, SCO1 and SCO2. Interacts with TMEM177 in a COX20-dependent manner. Interacts with COX20. Interacts with COX16. It depends on Cu cation as a cofactor.

It is found in the mitochondrion inner membrane. The catalysed reaction is 4 Fe(II)-[cytochrome c] + O2 + 8 H(+)(in) = 4 Fe(III)-[cytochrome c] + 2 H2O + 4 H(+)(out). Its function is as follows. Component of the cytochrome c oxidase, the last enzyme in the mitochondrial electron transport chain which drives oxidative phosphorylation. The respiratory chain contains 3 multisubunit complexes succinate dehydrogenase (complex II, CII), ubiquinol-cytochrome c oxidoreductase (cytochrome b-c1 complex, complex III, CIII) and cytochrome c oxidase (complex IV, CIV), that cooperate to transfer electrons derived from NADH and succinate to molecular oxygen, creating an electrochemical gradient over the inner membrane that drives transmembrane transport and the ATP synthase. Cytochrome c oxidase is the component of the respiratory chain that catalyzes the reduction of oxygen to water. Electrons originating from reduced cytochrome c in the intermembrane space (IMS) are transferred via the dinuclear copper A center (CU(A)) of subunit 2 and heme A of subunit 1 to the active site in subunit 1, a binuclear center (BNC) formed by heme A3 and copper B (CU(B)). The BNC reduces molecular oxygen to 2 water molecules using 4 electrons from cytochrome c in the IMS and 4 protons from the mitochondrial matrix. This chain is Cytochrome c oxidase subunit 2 (MT-CO2), found in Cratogeomys castanops (Yellow-faced pocket gopher).